Reading from the N-terminus, the 96-residue chain is Large ribosomal subunit protein uL23 (96 aa).

It belongs to the universal ribosomal protein uL23 family. As to quaternary structure, part of the 50S ribosomal subunit. Contacts protein L29, and trigger factor when it is bound to the ribosome.

One of the early assembly proteins it binds 23S rRNA. One of the proteins that surrounds the polypeptide exit tunnel on the outside of the ribosome. Forms the main docking site for trigger factor binding to the ribosome. This is Large ribosomal subunit protein uL23 from Nitratidesulfovibrio vulgaris (strain ATCC 29579 / DSM 644 / CCUG 34227 / NCIMB 8303 / VKM B-1760 / Hildenborough) (Desulfovibrio vulgaris).